The primary structure comprises 721 residues: MLPRGRPRALGAAALLLLLLLLGFLLFGGDLGCERREPGGRAGAPGCFPGPLMPRVPPDGRLRRAAALDGDPGAGPGDHNRSDCGPQPPPPPKCELLHVAIVCAGHNSSRDVITLVKSMLFYRKNPLHLHLVTDAVARNILETLFHTWMVPAVRVSFYHADQLKPQVSWIPNKHYSGLYGLMKLVLPSALPAELARVIVLDTDVTFASDISELWALFAHFSDTQAIGLVENQSDWYLGNLWKNHRPWPALGRGFNTGVILLRLDRLRQAGWEQMWRLTARRELLSLPATSLADQDIFNAVIKEHPGLVQRLPCVWNVQLSDHTLAERCYSEASDLKVIHWNSPKKLRVKNKHVEFFRNFYLTFLEYDGNLLRRELFVCPSQPPPGAEQLQQALAQLDEEDPCFEFRQQQLTVHRVHVTFLPHEPPPPRPHDVTLVAQLSMDRLQMLEALCRHWPGPMSLALYLTDAEAQQFLHFVEASPVLAARQDVAYHVVYREGPLYPVNQLRNVALAQALTPYVFLSDIDFLPAYSLYDYLRASIEQLGLGSRRKAALVVPAFETLRYRFSFPHSKVELLALLDAGTLYTFRYHEWPRGHAPTDYARWREAQAPYRVQWAANYEPYVVVPRDCPRYDPRFVGFGWNKVAHIVELDAQEYELLVLPEAFTIHLPHAPSLDISRFRSSPTYRDCLQALKDEFHQDLSRHHGAAALKYLPALQQPQSPARG.

Residues 1–8 (MLPRGRPR) are Cytoplasmic-facing. A helical; Signal-anchor for type II membrane protein membrane pass occupies residues 9 to 29 (ALGAAALLLLLLLLGFLLFGG). Residues 30–721 (DLGCERREPG…LQQPQSPARG (692 aa)) are Lumenal-facing. Residues 59–89 (DGRLRRAAALDGDPGAGPGDHNRSDCGPQPP) form a disordered region. Asn80 and Asn107 each carry an N-linked (GlcNAc...) asparagine glycan. A xylosyltransferase activity region spans residues 97-372 (LHVAIVCAGH…FLEYDGNLLR (276 aa)). Positions 201 and 203 each coordinate Mn(2+). A glycan (N-linked (GlcNAc...) asparagine) is linked at Asn231. Residues 373-715 (RELFVCPSQP…LKYLPALQQP (343 aa)) form a glucuronyltransferase activity region. Mn(2+)-binding residues include Asp521 and Asp523.

This sequence in the C-terminal section; belongs to the glycosyltransferase 49 family. In the N-terminal section; belongs to the glycosyltransferase 8 family. Interacts with B4GAT1. The cofactor is Mn(2+). Widely expressed. Expressed at high level in placenta, pancreas and kidney compared to LARGE. Not expressed in brain.

Its subcellular location is the golgi apparatus membrane. The catalysed reaction is 3-O-[beta-D-GlcA-(1-&gt;3)-beta-D-Xyl-(1-&gt;4)-Rib-ol-P-Rib-ol-P-3-beta-D-GalNAc-(1-&gt;3)-beta-D-GlcNAc-(1-&gt;4)-(O-6-P-alpha-D-Man)]-Thr-[protein] + UDP-alpha-D-xylose = 3-O-[alpha-D-Xyl-(1-&gt;3)-beta-D-GlcA-(1-&gt;4)-beta-D-Xyl-(1-&gt;4)-Rib-ol-P-Rib-ol-P-3-beta-D-GalNAc-(1-&gt;3)-beta-D-GlcNAc-(1-&gt;4)-(O-6-P-alpha-D-Man)]-Thr-[protein] + UDP + H(+). The enzyme catalyses 3-O-{(1-&gt;[3)-alpha-D-Xyl-(1-&gt;3)-beta-D-GlcA-(1-&gt;](n)-4)-beta-D-Xyl-(1-&gt;4)-Rib-ol-P-Rib-ol-P-3-beta-D-GalNAc-(1-&gt;3)-beta-D-GlcNAc-(1-&gt;4)-O-6-P-alpha-D-Man}-L-Thr-[protein] + UDP-alpha-D-glucuronate = 3-O-{beta-D-GlcA-(1-&gt;[3)-alpha-D-Xyl-(1-&gt;3)-beta-D-GlcA-(1-&gt;](n)-4)-beta-D-Xyl-(1-&gt;4)-Rib-ol-P-Rib-ol-P-3-beta-D-GalNAc-(1-&gt;3)-beta-D-GlcNAc-(1-&gt;4)-O-6-P-alpha-D-Man}-L-Thr-[protein] + UDP + H(+). It catalyses the reaction 3-O-{beta-D-GlcA-(1-&gt;[3)-alpha-D-Xyl-(1-&gt;3)-beta-D-GlcA-(1-&gt;](n)-4)-beta-D-Xyl-(1-&gt;4)-Rib-ol-P-Rib-ol-P-3-beta-D-GalNAc-(1-&gt;3)-beta-D-GlcNAc-(1-&gt;4)-O-6-P-alpha-D-Man}-L-Thr-[protein] + UDP-alpha-D-xylose = 3-O-{(1-&gt;[3)-alpha-D-Xyl-(1-&gt;3)-beta-D-GlcA-(1-&gt;](n+1)-4)-beta-D-Xyl-(1-&gt;4)-Rib-ol-P-Rib-ol-P-3-beta-D-GalNAc-(1-&gt;3)-beta-D-GlcNAc-(1-&gt;4)-O-6-P-alpha-D-Man}-L-Thr-[protein] + UDP + H(+). It functions in the pathway protein modification; protein glycosylation. Its function is as follows. Bifunctional glycosyltransferase with both alpha-1,3-xylosyltransferase and beta-1,3-glucuronyltransferase activities involved in the maturation of alpha-dystroglycan (DAG1) by glycosylation leading to DAG1 binding to laminin G-like domain-containing extracellular proteins with high affinity and in a phosphorylated-O-mannosyl trisaccharide dependent manner. Elongates the glucuronyl-beta-1,4-xylose-beta disaccharide primer structure by adding repeating units [-3-Xylose-alpha-1,3-GlcA-beta-1-] to produce a heteropolysaccharide. Supports the maturation of DAG1 more effectively than LARGE1. In addition, can modify both heparan sulfate (HS)- and chondroitin/dermatan sulfate (CS/DS)-proteoglycans (PGs), namely GPC4, with a glycosaminoglycan (GAG)-like polysaccharide composed of xylose and glucuronic acid to confer laminin binding. The protein is Xylosyl- and glucuronyltransferase LARGE2 of Homo sapiens (Human).